A 359-amino-acid chain; its full sequence is Peptide chain release factor 1 (359 aa).

Glutamine 235 is subject to N5-methylglutamine.

Belongs to the prokaryotic/mitochondrial release factor family. In terms of processing, methylated by PrmC. Methylation increases the termination efficiency of RF1.

It is found in the cytoplasm. Its function is as follows. Peptide chain release factor 1 directs the termination of translation in response to the peptide chain termination codons UAG and UAA. This is Peptide chain release factor 1 from Methylibium petroleiphilum (strain ATCC BAA-1232 / LMG 22953 / PM1).